The chain runs to 103 residues: MSFKLFIKNLPTNLCCGLIHIYRWTISPLLGSPCRFFPTCSQYALQALKHHGCIKGLGLTIKRIGKCGPWHPGGVDLVPMTTLEEALDISPAVDDDESCDLHA.

Belongs to the UPF0161 family.

It localises to the cell inner membrane. Could be involved in insertion of integral membrane proteins into the membrane. The protein is Putative membrane protein insertion efficiency factor of Chlamydia caviae (strain ATCC VR-813 / DSM 19441 / 03DC25 / GPIC) (Chlamydophila caviae).